We begin with the raw amino-acid sequence, 414 residues long: Protein PHLOEM PROTEIN 2-LIKE A10 (414 aa).

A run of 2 helical transmembrane segments spans residues Trp-20 to Leu-40 and Tyr-379 to Ile-399.

The protein localises to the membrane. This is Protein PHLOEM PROTEIN 2-LIKE A10 (PP2A10) from Arabidopsis thaliana (Mouse-ear cress).